Consider the following 82-residue polypeptide: Putative antimicrobial peptide 7848 (82 aa).

An N-terminal signal peptide occupies residues 1–17; it reads MNENLWAAPAPKKLSKH. The disordered stretch occupies residues 16-60; that stretch reads KHFFGRGGPLGKETGPNLFPKKPGAGKGLGFPPTKKPRGQPRVLK. Positions 38 to 82 are excised as a propeptide; that stretch reads PGAGKGLGFPPTKKPRGQPRVLKKPKWNSEGLIGILHRGSDGVQF. A compositionally biased stretch (basic residues) spans 50–60; that stretch reads KKPRGQPRVLK.

The protein belongs to the non-disulfide-bridged peptide (NDBP) superfamily. Short antimicrobial peptide (group 4) family. Expressed by the venom gland.

The protein localises to the secreted. The protein is Putative antimicrobial peptide 7848 of Urodacus yaschenkoi (Inland robust scorpion).